We begin with the raw amino-acid sequence, 522 residues long: Involucrin (522 aa).

Residues 1–15 (MSQQHTLPVTLSPAL) are compositionally biased toward polar residues. Disordered regions lie at residues 1 to 126 (MSQQ…LEEE), 159 to 329 (QEGQ…LVQQ), and 366 to 496 (QEGQ…QPVL). The segment covering 76 to 91 (EQQQQEPQEQELQQQH) has biased composition (low complexity). Positions 92-126 (WEQHEEHQKAENPEQQLKQEKAQRDQQLNEHLEEE) are enriched in basic and acidic residues. Residues 169 to 181 (QEGQLELPEQQEG) show a composition bias toward low complexity. Basic and acidic residues-rich tracts occupy residues 182 to 198 (QLEHLEQQEGQLKHLDQ), 214 to 231 (KHLEQQEGQLKHLEHQKG), 252 to 264 (QLKHLDQQEKQPE), 274 to 290 (KHLEQQEGQLEHMEHQE), and 305 to 323 (QLEEQEGQPKHLEEEEGQL). The span at 375–389 (QQQGQLEVSEQQVGQ) shows a compositional bias: low complexity. Basic and acidic residues-rich tracts occupy residues 391-401 (KHLEQEGKQLE), 409-418 (QLKHLEKQEA), and 431-465 (KHPEQQEKQLEHPEQQEGQLKHLEQQEGQLKDLEQ). Positions 466–479 (QKGQLEQQQGQLEQ) are enriched in low complexity.

This sequence belongs to the involucrin family. In terms of assembly, directly or indirectly cross-linked to cornifelin (CNFN). In terms of processing, substrate of transglutaminase. Specific glutamines or lysines are cross-linked to keratins, desmoplakin and to inter involucrin molecules. In terms of tissue distribution, keratinocytes of epidermis and other stratified squamous epithelia.

The protein resides in the cytoplasm. Functionally, part of the insoluble cornified cell envelope (CE) of stratified squamous epithelia. The chain is Involucrin (IVL) from Hylobates lar (Lar gibbon).